Reading from the N-terminus, the 111-residue chain is DNA-directed RNA polymerase subunit Rpo11 (111 aa).

The protein belongs to the archaeal Rpo11/eukaryotic RPB11/RPC19 RNA polymerase subunit family. In terms of assembly, part of the RNA polymerase complex.

It localises to the cytoplasm. The enzyme catalyses RNA(n) + a ribonucleoside 5'-triphosphate = RNA(n+1) + diphosphate. In terms of biological role, DNA-dependent RNA polymerase (RNAP) catalyzes the transcription of DNA into RNA using the four ribonucleoside triphosphates as substrates. This Thermoplasma acidophilum (strain ATCC 25905 / DSM 1728 / JCM 9062 / NBRC 15155 / AMRC-C165) protein is DNA-directed RNA polymerase subunit Rpo11.